Consider the following 242-residue polypeptide: Segregation and condensation protein A (242 aa).

This sequence belongs to the ScpA family. In terms of assembly, component of a cohesin-like complex composed of ScpA, ScpB and the Smc homodimer, in which ScpA and ScpB bind to the head domain of Smc. The presence of the three proteins is required for the association of the complex with DNA.

It localises to the cytoplasm. Participates in chromosomal partition during cell division. May act via the formation of a condensin-like complex containing Smc and ScpB that pull DNA away from mid-cell into both cell halves. The protein is Segregation and condensation protein A of Streptococcus pneumoniae serotype 19F (strain G54).